The chain runs to 328 residues: Purple acid phosphatase 7 (328 aa).

The signal sequence occupies residues 1 to 24; the sequence is MKMHVCFSVILMFLSIFFINGALS. Aspartate 48 is a binding site for Fe cation. Asparagine 56 carries an N-linked (GlcNAc...) asparagine glycan. Fe cation is bound by residues aspartate 81 and tyrosine 84. Residue aspartate 81 participates in Zn(2+) binding. Asparagine 119 and histidine 213 together coordinate Zn(2+). Histidine 222 serves as the catalytic Proton donor. Histidine 248 provides a ligand contact to Zn(2+). 248–250 contributes to the substrate binding site; sequence HDH. Residue histidine 250 participates in Fe cation binding.

The protein belongs to the metallophosphoesterase superfamily. Purple acid phosphatase family. As to quaternary structure, homodimer. Fe cation is required as a cofactor. Requires Zn(2+) as cofactor. As to expression, expressed in roots, stems, leaves, flowers and siliques.

Its subcellular location is the secreted. The enzyme catalyses a phosphate monoester + H2O = an alcohol + phosphate. In Arabidopsis thaliana (Mouse-ear cress), this protein is Purple acid phosphatase 7 (PAP7).